The sequence spans 126 residues: Large ribosomal subunit protein bL12 (126 aa).

This sequence belongs to the bacterial ribosomal protein bL12 family. In terms of assembly, homodimer. Part of the ribosomal stalk of the 50S ribosomal subunit. Forms a multimeric L10(L12)X complex, where L10 forms an elongated spine to which 2 to 4 L12 dimers bind in a sequential fashion. Binds GTP-bound translation factors.

In terms of biological role, forms part of the ribosomal stalk which helps the ribosome interact with GTP-bound translation factors. Is thus essential for accurate translation. This Bordetella avium (strain 197N) protein is Large ribosomal subunit protein bL12.